Here is a 338-residue protein sequence, read N- to C-terminus: Tetraacyldisaccharide 4'-kinase (338 aa).

Position 51–58 (His-51–Thr-58) interacts with ATP.

It belongs to the LpxK family.

The enzyme catalyses a lipid A disaccharide + ATP = a lipid IVA + ADP + H(+). It functions in the pathway glycolipid biosynthesis; lipid IV(A) biosynthesis; lipid IV(A) from (3R)-3-hydroxytetradecanoyl-[acyl-carrier-protein] and UDP-N-acetyl-alpha-D-glucosamine: step 6/6. In terms of biological role, transfers the gamma-phosphate of ATP to the 4'-position of a tetraacyldisaccharide 1-phosphate intermediate (termed DS-1-P) to form tetraacyldisaccharide 1,4'-bis-phosphate (lipid IVA). The chain is Tetraacyldisaccharide 4'-kinase from Bradyrhizobium diazoefficiens (strain JCM 10833 / BCRC 13528 / IAM 13628 / NBRC 14792 / USDA 110).